A 189-amino-acid polypeptide reads, in one-letter code: Probable chorismate pyruvate-lyase (189 aa).

The substrate site is built by Arg-74, Leu-113, and Glu-175.

This sequence belongs to the UbiC family.

It is found in the cytoplasm. The catalysed reaction is chorismate = 4-hydroxybenzoate + pyruvate. It participates in cofactor biosynthesis; ubiquinone biosynthesis. Functionally, removes the pyruvyl group from chorismate, with concomitant aromatization of the ring, to provide 4-hydroxybenzoate (4HB) for the ubiquinone pathway. The protein is Probable chorismate pyruvate-lyase of Azoarcus sp. (strain BH72).